The sequence spans 360 residues: Phospho-N-acetylmuramoyl-pentapeptide-transferase (360 aa).

The next 10 helical transmembrane spans lie at 26 to 46 (TILG…AVIQ), 73 to 93 (TMGG…WADL), 98 to 118 (VWVV…DDAL), 136 to 156 (LQVL…TDPV), 168 to 188 (WVFP…VGSS), 199 to 219 (GLAI…AYAS), 235 to 255 (GVGE…GFLW), 263 to 283 (VFMG…VAVA), 288 to 308 (IVLF…MIQV), and 338 to 358 (VIVR…AMLK).

Belongs to the glycosyltransferase 4 family. MraY subfamily. Mg(2+) serves as cofactor.

The protein localises to the cell inner membrane. The catalysed reaction is UDP-N-acetyl-alpha-D-muramoyl-L-alanyl-gamma-D-glutamyl-meso-2,6-diaminopimeloyl-D-alanyl-D-alanine + di-trans,octa-cis-undecaprenyl phosphate = di-trans,octa-cis-undecaprenyl diphospho-N-acetyl-alpha-D-muramoyl-L-alanyl-D-glutamyl-meso-2,6-diaminopimeloyl-D-alanyl-D-alanine + UMP. Its pathway is cell wall biogenesis; peptidoglycan biosynthesis. Its function is as follows. Catalyzes the initial step of the lipid cycle reactions in the biosynthesis of the cell wall peptidoglycan: transfers peptidoglycan precursor phospho-MurNAc-pentapeptide from UDP-MurNAc-pentapeptide onto the lipid carrier undecaprenyl phosphate, yielding undecaprenyl-pyrophosphoryl-MurNAc-pentapeptide, known as lipid I. The protein is Phospho-N-acetylmuramoyl-pentapeptide-transferase of Halorhodospira halophila (strain DSM 244 / SL1) (Ectothiorhodospira halophila (strain DSM 244 / SL1)).